The following is a 200-amino-acid chain: MSQSNQPDSSVTQTQAEEAVRTLLRWAGEDPTREGLLDTPRRVAEAYGDWFSGYREEPREYLERTFEEVAGYDELIVLRDISYESHCEHHMAPIIGKVHVGYLPRGKVVGISKLARVVESYARRFQVQEKMTAQIAQCIQDVLQPLGVGVVVEGAHECMTTRGIHKRGVSMVTSKMLGTFREDARTRAEFLQFIEVGGKR.

Zn(2+) is bound by residues cysteine 87, histidine 90, and cysteine 158.

Belongs to the GTP cyclohydrolase I family. As to quaternary structure, toroid-shaped homodecamer, composed of two pentamers of five dimers.

It catalyses the reaction GTP + H2O = 7,8-dihydroneopterin 3'-triphosphate + formate + H(+). It participates in cofactor biosynthesis; 7,8-dihydroneopterin triphosphate biosynthesis; 7,8-dihydroneopterin triphosphate from GTP: step 1/1. The protein is GTP cyclohydrolase 1 of Xanthomonas euvesicatoria pv. vesicatoria (strain 85-10) (Xanthomonas campestris pv. vesicatoria).